A 303-amino-acid chain; its full sequence is Trans-aconitate 2-methyltransferase (303 aa).

Residues 271-303 form a disordered region; the sequence is EGSGGSGGSGGSAGSAGCAGSGGSVGPAGEAGR. Gly residues predominate over residues 272–303; the sequence is GSGGSGGSGGSAGSAGCAGSGGSVGPAGEAGR.

This sequence belongs to the methyltransferase superfamily. Tam family.

The protein localises to the cytoplasm. The enzyme catalyses trans-aconitate + S-adenosyl-L-methionine = (E)-3-(methoxycarbonyl)pent-2-enedioate + S-adenosyl-L-homocysteine. Its function is as follows. Catalyzes the S-adenosylmethionine monomethyl esterification of trans-aconitate. The polypeptide is Trans-aconitate 2-methyltransferase (Streptomyces coelicolor (strain ATCC BAA-471 / A3(2) / M145)).